We begin with the raw amino-acid sequence, 413 residues long: Protein trichome birefringence-like 9 (413 aa).

The chain crosses the membrane as a helical; Signal-anchor for type II membrane protein span at residues 22-42 (LFVSLFLLSLLIFSTVVVDVM). The short motif at 141–143 (GDS) is the GDS motif element. The DCXHWCLPGXXDXWN motif signature appears at 384–398 (DCSHWCLPGVPDTWN).

This sequence belongs to the PC-esterase family. TBL subfamily.

The protein resides in the membrane. Functionally, may act as a bridging protein that binds pectin and other cell wall polysaccharides. Probably involved in maintaining esterification of pectins. May be involved in the specific O-acetylation of cell wall polymers. The sequence is that of Protein trichome birefringence-like 9 (TBL9) from Arabidopsis thaliana (Mouse-ear cress).